Consider the following 433-residue polypeptide: Mitochondrial inner membrane magnesium transporter MIT1 (433 aa).

Residues 257 to 298 adopt a coiled-coil conformation; sequence TNKLLRDMMKIKNNLQKLSNLLNALRTNIEKILNNENDMKNM. A helical transmembrane segment spans residues 360–380; that stretch reads FILLNAKISFSTLLFSISSVV. Residues 381–396 are Extracellular-facing; that stretch reads TSLFGMNLKNFVEDSN. A helical membrane pass occupies residues 397–417; it reads YAFIIVSIFVSVWSIIGIYVT. The Mitochondrial matrix segment spans residues 418–433; sequence KNINTLLKFFDRYNFR.

It belongs to the CorA metal ion transporter (MIT) (TC 1.A.35) family.

The protein resides in the mitochondrion inner membrane. In terms of biological role, mitochondrial inner membrane magnesium transporter required for mitochondrial magnesium homeostasis. Involved in the development of the sporozoite in the mosquito vector midgut. The chain is Mitochondrial inner membrane magnesium transporter MIT1 from Plasmodium berghei (strain Anka).